We begin with the raw amino-acid sequence, 340 residues long: Pre-rRNA-processing protein esf-2 (340 aa).

Basic and acidic residues-rich tracts occupy residues 1 to 12 and 19 to 32; these read MPEDDVRNKFLD and DAGHGSDSEDDFQK. The disordered stretch occupies residues 1 to 103; that stretch reads MPEDDVRNKF…KSVLASDLPG (103 aa). Residues 44–64 are compositionally biased toward acidic residues; the sequence is DDEDSEADDFTDAEEEHDQDD. Residues 65–95 show a composition bias toward basic and acidic residues; sequence AESKDAPAKDGQETTDGKEKKDGKKEKEKKS. Residues 124–214 enclose the RRM domain; sequence GVVYISRVPP…KKGSYYRDDI (91 aa). Residues 272 to 329 are disordered; the sequence is AKKASKGSKAGGEGAAQVTESTIPSAAATTTTTTNDDKRRTFKQIPLAKKRKLDETQP.

It belongs to the ESF2/ABP1 family.

It localises to the nucleus. It is found in the nucleolus. In terms of biological role, involved in the small subunit (SSU) processome assembly and function, and in the 18S rRNA synthesis. Required for the early cleavages at sites A0, A1 and A2. This Neurospora crassa (strain ATCC 24698 / 74-OR23-1A / CBS 708.71 / DSM 1257 / FGSC 987) protein is Pre-rRNA-processing protein esf-2 (esf-2).